A 156-amino-acid polypeptide reads, in one-letter code: Small ribosomal subunit protein uS7 (156 aa).

This sequence belongs to the universal ribosomal protein uS7 family. In terms of assembly, part of the 30S ribosomal subunit. Contacts proteins S9 and S11.

In terms of biological role, one of the primary rRNA binding proteins, it binds directly to 16S rRNA where it nucleates assembly of the head domain of the 30S subunit. Is located at the subunit interface close to the decoding center, probably blocks exit of the E-site tRNA. The protein is Small ribosomal subunit protein uS7 of Nitrosospira multiformis (strain ATCC 25196 / NCIMB 11849 / C 71).